We begin with the raw amino-acid sequence, 668 residues long: UvrABC system protein B (668 aa).

The region spanning 31-416 (QGITDGVPAQ…RGHIIEQIIR (386 aa)) is the Helicase ATP-binding domain. Residue 44-51 (GTTGSGKT) participates in ATP binding. The Beta-hairpin motif lies at 97–120 (YYDYYQPEAYIARSDTYIEKSLLI). Positions 433-596 (QIDDLLEEIR…ITPQPIIKPI (164 aa)) constitute a Helicase C-terminal domain. Positions 621–656 (EASIKTYEEAMYQAAQEFQFDEAVKYRDLMNAAKKQ) constitute a UVR domain.

This sequence belongs to the UvrB family. Forms a heterotetramer with UvrA during the search for lesions. Interacts with UvrC in an incision complex.

The protein localises to the cytoplasm. The UvrABC repair system catalyzes the recognition and processing of DNA lesions. A damage recognition complex composed of 2 UvrA and 2 UvrB subunits scans DNA for abnormalities. Upon binding of the UvrA(2)B(2) complex to a putative damaged site, the DNA wraps around one UvrB monomer. DNA wrap is dependent on ATP binding by UvrB and probably causes local melting of the DNA helix, facilitating insertion of UvrB beta-hairpin between the DNA strands. Then UvrB probes one DNA strand for the presence of a lesion. If a lesion is found the UvrA subunits dissociate and the UvrB-DNA preincision complex is formed. This complex is subsequently bound by UvrC and the second UvrB is released. If no lesion is found, the DNA wraps around the other UvrB subunit that will check the other stand for damage. The polypeptide is UvrABC system protein B (Chlamydia trachomatis serovar A (strain ATCC VR-571B / DSM 19440 / HAR-13)).